Consider the following 409-residue polypeptide: DNA double-strand break repair protein Mre11 (409 aa).

Mn(2+) is bound by residues aspartate 9, histidine 11, aspartate 50, and glutamate 85. Histidine 86 acts as the Proton donor in catalysis. Mn(2+) contacts are provided by histidine 170, histidine 199, and histidine 201.

Belongs to the MRE11/RAD32 family. As to quaternary structure, homodimer. Forms a heterotetramer composed of two Mre11 subunits and two Rad50 subunits. Requires Mn(2+) as cofactor.

Its activity is regulated as follows. Nuclease activity is regulated by Rad50. Its function is as follows. Part of the Rad50/Mre11 complex, which is involved in the early steps of DNA double-strand break (DSB) repair. The complex may facilitate opening of the processed DNA ends to aid in the recruitment of HerA and NurA. Mre11 binds to DSB ends and has both double-stranded 3'-5' exonuclease activity and single-stranded endonuclease activity. The sequence is that of DNA double-strand break repair protein Mre11 from Aeropyrum pernix (strain ATCC 700893 / DSM 11879 / JCM 9820 / NBRC 100138 / K1).